Here is a 714-residue protein sequence, read N- to C-terminus: MEMASAFTLNVRLDNIAIITIDVPGEKMNTLKAEFASQVRAIIKQIRENKELRGVVFVSAKPDNFIAGADINMIGNCKTAQEAEVLARQGQQLMAEIHALPIPVIAAIHGACLGGGLELALACHGRVCTDDPKTVLGLPEVQLGLLPGSGGTQRLPRLIGVSTALEMILTGKQLRAKQAVKLGLVDDVVPHSILLEAAVELAKQDRPSSRPLPVRERILAGPLGRALLFKMVGKKTEHKTQGNYPATERILEVVETGLAQGTSSGYDAEARAFGELAMTPQSQALRNIFFASSEVKKDPGSDAPPAPLNSVGILGGGLMGGGIAYVTACKAGLPVRIKDINPRGINHALKYSWDQLEGKVRRRHLKASERDKQLALISGTTDYCGFAHRDLIIEAVFENLELKQQMVAEVEQNCATHTIFASNTSSLPIGDIAAHAARPEQVIGLHFFSPVEKMPLVEIIPHASTSAQTIATTVKLAKKQGKTPIVVRDKAGFYVNRILAPYINEAIRMLTEGERIEHIDAALVKFGFPVGPIQLLDEVGIDTGTKIMPVLEAAYGERFSAPANVVSSILNDDRKGRKNGRGFYLYGQKGRKSKKQVDPAIYPLIGAQGQGRLSAPQVAERCVMLMLNEAVRCLDEQVIRSVRDGDIGAVFGIGFPPFLGGPFRYIDSLGAGEVVAIMQRLATQYGSRFTPCDRLVEMSERGESFWKTTATDLQ.

An enoyl-CoA hydratase region spans residues 1-190 (MEMASAFTLN…KLGLVDDVVP (190 aa)). The 3-hydroxyacyl-CoA dehydrogenase stretch occupies residues 306–714 (APLNSVGILG…FWKTTATDLQ (409 aa)).

It in the N-terminal section; belongs to the enoyl-CoA hydratase/isomerase family. In the central section; belongs to the 3-hydroxyacyl-CoA dehydrogenase family. In terms of assembly, heterotetramer of two alpha chains (FadJ) and two beta chains (FadI).

It localises to the cytoplasm. The enzyme catalyses a (3S)-3-hydroxyacyl-CoA = a (2E)-enoyl-CoA + H2O. It carries out the reaction a 4-saturated-(3S)-3-hydroxyacyl-CoA = a (3E)-enoyl-CoA + H2O. The catalysed reaction is a (3S)-3-hydroxyacyl-CoA + NAD(+) = a 3-oxoacyl-CoA + NADH + H(+). It catalyses the reaction (3S)-3-hydroxybutanoyl-CoA = (3R)-3-hydroxybutanoyl-CoA. Its pathway is lipid metabolism; fatty acid beta-oxidation. Catalyzes the formation of a hydroxyacyl-CoA by addition of water on enoyl-CoA. Also exhibits 3-hydroxyacyl-CoA epimerase and 3-hydroxyacyl-CoA dehydrogenase activities. The sequence is that of Fatty acid oxidation complex subunit alpha from Escherichia coli O127:H6 (strain E2348/69 / EPEC).